Reading from the N-terminus, the 180-residue chain is ATP-dependent protease subunit HslV (180 aa).

Residue Thr-2 is part of the active site. Residues Gly-158, Cys-161, and Thr-164 each contribute to the Na(+) site.

The protein belongs to the peptidase T1B family. HslV subfamily. As to quaternary structure, a double ring-shaped homohexamer of HslV is capped on each side by a ring-shaped HslU homohexamer. The assembly of the HslU/HslV complex is dependent on binding of ATP.

Its subcellular location is the cytoplasm. It catalyses the reaction ATP-dependent cleavage of peptide bonds with broad specificity.. Allosterically activated by HslU binding. Functionally, protease subunit of a proteasome-like degradation complex believed to be a general protein degrading machinery. The chain is ATP-dependent protease subunit HslV from Baumannia cicadellinicola subsp. Homalodisca coagulata.